The primary structure comprises 215 residues: Ribosomal RNA small subunit methyltransferase G (215 aa).

Residues glycine 77, phenylalanine 82, 130-131 (IE), and arginine 146 each bind S-adenosyl-L-methionine.

The protein belongs to the methyltransferase superfamily. RNA methyltransferase RsmG family.

Its subcellular location is the cytoplasm. The enzyme catalyses guanosine(527) in 16S rRNA + S-adenosyl-L-methionine = N(7)-methylguanosine(527) in 16S rRNA + S-adenosyl-L-homocysteine. Its function is as follows. Specifically methylates the N7 position of guanine in position 527 of 16S rRNA. This chain is Ribosomal RNA small subunit methyltransferase G, found in Bartonella quintana (strain Toulouse) (Rochalimaea quintana).